Here is a 384-residue protein sequence, read N- to C-terminus: Methyl-CpG-binding domain-containing protein 10 (384 aa).

The 71-residue stretch at 4-74 folds into the MBD domain; it reads TDELVSIELP…SEFEWTTGET (71 aa). The interval 65-384 is disordered; sequence SEFEWTTGET…QQGAAASVSC (320 aa). Over residues 80–91 the composition is skewed to polar residues; it reads RISQKVKATTPT. The stretch at 100 to 224 forms a coiled coil; that stretch reads KRRSSLTKKD…MEVDTSELEK (125 aa). 3 stretches are compositionally biased toward basic and acidic residues: residues 106 to 227, 234 to 250, and 257 to 269; these read TKKD…KKAG, EPSK…KEAQ, and DVEK…KTEN. The span at 270–284 shows a compositional bias: polar residues; sequence KGSVTTEANGEQNVT. The span at 295 to 365 shows a compositional bias: basic and acidic residues; sequence EADKGKESKE…NDMKAEDTNR (71 aa). The stretch at 310–356 forms a coiled coil; the sequence is TEAEANKENDTQESDEKKTEAAANKENETQESDVKKTEAAVAEEKSN. The residue at position 323 (Ser323) is a Phosphoserine. Low complexity predominate over residues 369 to 384; sequence ANQVQQQQGAAASVSC.

Expressed in leaves, buds, flowers, stems and siliques.

The protein localises to the nucleus. Its function is as follows. Probable transcriptional regulator. Required for nucleolar dominance that consist in the silencing of rRNA genes inherited from one progenitor in genetic hybrids. The protein is Methyl-CpG-binding domain-containing protein 10 (MBD10) of Arabidopsis thaliana (Mouse-ear cress).